Here is a 533-residue protein sequence, read N- to C-terminus: Probable protein kinase UbiB (533 aa).

A helical transmembrane segment spans residues 24-44 (LILELPMLPWWLRLLGATLPW). The 369-residue stretch at 126 to 494 (RFEREPLASA…WKGSRHDWLG (369 aa)) folds into the Protein kinase domain. Residues 132-140 (LASASVAQV) and Lys154 contribute to the ATP site. Asp289 acts as the Proton acceptor in catalysis. A helical membrane pass occupies residues 510-530 (LGQQLEAWPAWVMLAGGVFLI).

Belongs to the ABC1 family. UbiB subfamily.

The protein resides in the cell inner membrane. Its pathway is cofactor biosynthesis; ubiquinone biosynthesis [regulation]. Functionally, is probably a protein kinase regulator of UbiI activity which is involved in aerobic coenzyme Q (ubiquinone) biosynthesis. This is Probable protein kinase UbiB from Pseudomonas aeruginosa (strain LESB58).